A 553-amino-acid polypeptide reads, in one-letter code: Cysteine desulfurase IscS (553 aa).

Positions 102–122 (NNISSNNTQYNNNSSNSGSLN) are enriched in low complexity. The tract at residues 102–125 (NNISSNNTQYNNNSSNSGSLNDEG) is disordered.

The protein belongs to the class-V pyridoxal-phosphate-dependent aminotransferase family. NifS/IscS subfamily. In terms of assembly, homotetramer. Interacts with Isd11; the interaction enhances cysteine desulfurase activity of IscS. Interacts with IscU. Component of a complex, at least composed of IscS, Isd11 and IscU. Pyridoxal 5'-phosphate is required as a cofactor.

The protein localises to the mitochondrion. It carries out the reaction (sulfur carrier)-H + L-cysteine = (sulfur carrier)-SH + L-alanine. Its pathway is cofactor biosynthesis; iron-sulfur cluster biosynthesis. Its function is as follows. Catalyzes sulfur activation and mobilization in iron-sulfur cluster formation (ISC) pathway for iron-sulfur (Fe-S) cluster biogenesis. Active when in complex with a partner protein Isd11. The chain is Cysteine desulfurase IscS from Plasmodium falciparum (isolate 3D7).